Reading from the N-terminus, the 347-residue chain is Bifunctional methylenetetrahydrofolate dehydrogenase/cyclohydrolase 2, mitochondrial (347 aa).

Substrate is bound by residues Y98–K102 and V145–L147. NAD(+)-binding positions include G214–S216 and R247. P323 to G327 provides a ligand contact to substrate.

This sequence belongs to the tetrahydrofolate dehydrogenase/cyclohydrolase family. Mg(2+) serves as cofactor. As to expression, isoform 1, isoform 4 and isoform 5 are expressed in brain and placenta.

The protein localises to the mitochondrion inner membrane. The catalysed reaction is (6R)-5,10-methylene-5,6,7,8-tetrahydrofolate + NAD(+) = (6R)-5,10-methenyltetrahydrofolate + NADH. The enzyme catalyses (6R)-5,10-methenyltetrahydrofolate + H2O = (6R)-10-formyltetrahydrofolate + H(+). It carries out the reaction (6R)-5,10-methylene-5,6,7,8-tetrahydrofolate + NADP(+) = (6R)-5,10-methenyltetrahydrofolate + NADPH. Its pathway is one-carbon metabolism; tetrahydrofolate interconversion. Its function is as follows. Bifunctional mitochondrial folate-interconverting enzyme that has both NAD/NADP-dependent methylenetetrahydrofolate dehydrogenase and methenyltetrahydrofolate cyclohydrolase activities. The polypeptide is Bifunctional methylenetetrahydrofolate dehydrogenase/cyclohydrolase 2, mitochondrial (Homo sapiens (Human)).